We begin with the raw amino-acid sequence, 518 residues long: Membrane-bound lytic murein transglycosylase F (518 aa).

The N-terminal stretch at 1-21 (MKKLKINYLFIGILALLLAVA) is a signal peptide. The tract at residues 22–269 (LWPSIPWFGK…RIEEKYLGHG (248 aa)) is non-LT domain. Residues 270-518 (DDFDYVDTRT…SRKGSEEKQN (249 aa)) are LT domain. The active site involves Glu314.

This sequence in the N-terminal section; belongs to the bacterial solute-binding protein 3 family. The protein in the C-terminal section; belongs to the transglycosylase Slt family.

It is found in the cell outer membrane. The catalysed reaction is Exolytic cleavage of the (1-&gt;4)-beta-glycosidic linkage between N-acetylmuramic acid (MurNAc) and N-acetylglucosamine (GlcNAc) residues in peptidoglycan, from either the reducing or the non-reducing ends of the peptidoglycan chains, with concomitant formation of a 1,6-anhydrobond in the MurNAc residue.. In terms of biological role, murein-degrading enzyme that degrades murein glycan strands and insoluble, high-molecular weight murein sacculi, with the concomitant formation of a 1,6-anhydromuramoyl product. Lytic transglycosylases (LTs) play an integral role in the metabolism of the peptidoglycan (PG) sacculus. Their lytic action creates space within the PG sacculus to allow for its expansion as well as for the insertion of various structures such as secretion systems and flagella. This Escherichia coli (strain SMS-3-5 / SECEC) protein is Membrane-bound lytic murein transglycosylase F.